The primary structure comprises 213 residues: 3-demethoxyubiquinol 3-hydroxylase (213 aa).

Fe cation-binding residues include Glu-62, Glu-92, His-95, Glu-144, Glu-176, and His-179.

It belongs to the COQ7 family. The cofactor is Fe cation.

Its subcellular location is the cell membrane. The catalysed reaction is a 5-methoxy-2-methyl-3-(all-trans-polyprenyl)benzene-1,4-diol + AH2 + O2 = a 3-demethylubiquinol + A + H2O. It functions in the pathway cofactor biosynthesis; ubiquinone biosynthesis. Catalyzes the hydroxylation of 2-nonaprenyl-3-methyl-6-methoxy-1,4-benzoquinol during ubiquinone biosynthesis. The sequence is that of 3-demethoxyubiquinol 3-hydroxylase from Legionella pneumophila (strain Paris).